A 148-amino-acid chain; its full sequence is Deoxyuridine 5'-triphosphate nucleotidohydrolase (148 aa).

DUMP is bound by residues Ser69, Gly82, Asp85, Tyr88, Arg137, Phe142, and Gly143.

Belongs to the dUTPase family. As to quaternary structure, homotrimer. The cofactor is Mg(2+).

It carries out the reaction dUTP + H2O = dUMP + diphosphate + H(+). Its pathway is pyrimidine metabolism; dUMP biosynthesis; dUMP from dCTP (dUTP route): step 2/2. Functionally, involved in nucleotide metabolism via production of dUMP, the immediate precursor of thymidine nucleotides, and decreases the intracellular concentration of dUTP so that uracil cannot be incorporated into DNA. The polypeptide is Deoxyuridine 5'-triphosphate nucleotidohydrolase (DUT1) (Kluyveromyces lactis (strain ATCC 8585 / CBS 2359 / DSM 70799 / NBRC 1267 / NRRL Y-1140 / WM37) (Yeast)).